The following is a 176-amino-acid chain: Ribosome maturation factor RimM (176 aa).

Residues Glu-104–Ile-176 enclose the PRC barrel domain.

It belongs to the RimM family. As to quaternary structure, binds ribosomal protein uS19.

The protein resides in the cytoplasm. An accessory protein needed during the final step in the assembly of 30S ribosomal subunit, possibly for assembly of the head region. Essential for efficient processing of 16S rRNA. May be needed both before and after RbfA during the maturation of 16S rRNA. It has affinity for free ribosomal 30S subunits but not for 70S ribosomes. The protein is Ribosome maturation factor RimM of Thermotoga maritima (strain ATCC 43589 / DSM 3109 / JCM 10099 / NBRC 100826 / MSB8).